The chain runs to 1037 residues: Huntingtin-interacting protein 1 (1037 aa).

An ENTH domain is found at 32–160 (ERESFERTQT…EYHTKNPRFP (129 aa)). The residue at position 338 (serine 338) is a Phosphoserine. The stretch at 368–644 (VNKDEKDHLI…IQDALNQLEE (277 aa)) forms a coiled coil. The tract at residues 410–491 (SELEADLAEQ…HADLLRKNAE (82 aa)) is pDED. The I/LWEQ domain occupies 771–1012 (GLDIKQEELG…ELRKKHYELA (242 aa)). The segment at 867-924 (RWTEGLISASKAVGWGATVMVDAADLVVQGRGKFEELMVCSHEIAASTAQLVAASKVK) is important for actin binding. The disordered stretch occupies residues 1017–1037 (GWEEGTEASPPTLQEVVTEKE).

Belongs to the SLA2 family. As to quaternary structure, homodimer. Binds actin. Binds HTT (via N-terminus). This interaction is restricted to the brain. Binds to IFT57. In normal conditions, it poorly interacts with IFT57, HIP1 being strongly associated with HTT. However, in mutant HTT proteins with a long poly-Gln region, interaction between HTT and HIP1 is inhibited, promoting the interaction between HIP1 and IFT57. Interacts with CLTB (via N-terminus). Interacts (via coiled coil domain) with AR. Interacts with AP2A1, AP2A2, CLTC and HIP1R. Interacts with GRIA1, GRIN2A and GRIN2B. Ubiquitously expressed with the highest level in brain. Expression is up-regulated in prostate and colon cancer.

The protein localises to the cytoplasm. It is found in the nucleus. It localises to the endomembrane system. Its subcellular location is the cytoplasmic vesicle. The protein resides in the clathrin-coated vesicle membrane. Plays a role in clathrin-mediated endocytosis and trafficking. Involved in regulating AMPA receptor trafficking in the central nervous system in an NMDA-dependent manner. Regulates presynaptic nerve terminal activity. Enhances androgen receptor (AR)-mediated transcription. May act as a proapoptotic protein that induces cell death by acting through the intrinsic apoptosis pathway. Binds 3-phosphoinositides (via ENTH domain). May act through the ENTH domain to promote cell survival by stabilizing receptor tyrosine kinases following ligand-induced endocytosis. May play a functional role in the cell filament networks. May be required for differentiation, proliferation, and/or survival of somatic and germline progenitors. In Homo sapiens (Human), this protein is Huntingtin-interacting protein 1 (HIP1).